A 739-amino-acid polypeptide reads, in one-letter code: tRNA 5-methylaminomethyl-2-thiouridine biosynthesis bifunctional protein MnmC (739 aa).

The interval 1-282 (MDKVTPAKLS…KREMLTATKL (282 aa)) is tRNA (mnm(5)s(2)U34)-methyltransferase. Residues 330 to 739 (IGAGVCGLMA…HRSSLKKPLS (410 aa)) form an FAD-dependent cmnm(5)s(2)U34 oxidoreductase region.

In the N-terminal section; belongs to the methyltransferase superfamily. tRNA (mnm(5)s(2)U34)-methyltransferase family. The protein in the C-terminal section; belongs to the DAO family. FAD is required as a cofactor.

It localises to the cytoplasm. The catalysed reaction is 5-aminomethyl-2-thiouridine(34) in tRNA + S-adenosyl-L-methionine = 5-methylaminomethyl-2-thiouridine(34) in tRNA + S-adenosyl-L-homocysteine + H(+). Catalyzes the last two steps in the biosynthesis of 5-methylaminomethyl-2-thiouridine (mnm(5)s(2)U) at the wobble position (U34) in tRNA. Catalyzes the FAD-dependent demodification of cmnm(5)s(2)U34 to nm(5)s(2)U34, followed by the transfer of a methyl group from S-adenosyl-L-methionine to nm(5)s(2)U34, to form mnm(5)s(2)U34. In Psychrobacter sp. (strain PRwf-1), this protein is tRNA 5-methylaminomethyl-2-thiouridine biosynthesis bifunctional protein MnmC.